Here is a 112-residue protein sequence, read N- to C-terminus: MSSERDLVNFLGDFSMDVAKAVIAGGVATAIGSLASFACVSFGFPVILVGGAILLTGIVCTVVLNEIDAQCHLSEKLKYAIRDGLKRQQELDKWKRENMTPFMYVLNTPPVI.

At 1-21 (MSSERDLVNFLGDFSMDVAKA) the chain is on the cytoplasmic side. The chain crosses the membrane as a helical span at residues 22–42 (VIAGGVATAIGSLASFACVSF). Gly43 is a topological domain (periplasmic). Residues 44–64 (FPVILVGGAILLTGIVCTVVL) form a helical membrane-spanning segment. Residues 65–112 (NEIDAQCHLSEKLKYAIRDGLKRQQELDKWKRENMTPFMYVLNTPPVI) are Cytoplasmic-facing.

The protein localises to the cell inner membrane. The protein is Putative inner membrane protein YafU (yafU) of Escherichia coli (strain K12).